Reading from the N-terminus, the 497-residue chain is Guanosine-5'-triphosphate,3'-diphosphate pyrophosphatase (497 aa).

The protein belongs to the GppA/Ppx family. GppA subfamily.

The catalysed reaction is guanosine 3'-diphosphate 5'-triphosphate + H2O = guanosine 3',5'-bis(diphosphate) + phosphate + H(+). Its pathway is purine metabolism; ppGpp biosynthesis; ppGpp from GTP: step 2/2. Its function is as follows. Catalyzes the conversion of pppGpp to ppGpp. Guanosine pentaphosphate (pppGpp) is a cytoplasmic signaling molecule which together with ppGpp controls the 'stringent response', an adaptive process that allows bacteria to respond to amino acid starvation, resulting in the coordinated regulation of numerous cellular activities. The chain is Guanosine-5'-triphosphate,3'-diphosphate pyrophosphatase from Photobacterium profundum (strain SS9).